We begin with the raw amino-acid sequence, 351 residues long: MKKQYLKSGSGTRKEKDKAKRWFLDNGSIFLRELVADCNGKSIPIRSFSPEQILKATNNFDSSCFVSQDVYYKWYRGEIEDRSYMIKRFSEDEITGKRHRVKEVYNDIVLSARMSNHSNFLQLLGCCLEFPFPVLVFEFAEHGAMNQRGGVIVNGEESLLPWSVRLKIGKEIANAVTYLHTAFPKIIIHRDVKPMHVFLDKNWTAKLSDLSFSISLPEGKSRIEAEWVLGTFGYIDPLYHKTCFVTEYTDVYSFGICLLVIITGKPAIMTISDGDLQGILSLVRELCENGKLDEVIDPRLMKDITSGQRLQVEACVVLALRCCKERDEDRPKMIQVAKELKQIEASLKNSS.

A Protein kinase domain is found at 60 to 347 (FDSSCFVSQD…KELKQIEASL (288 aa)). Residues 66 to 74 (VSQDVYYKW) and lysine 87 each bind ATP. Catalysis depends on aspartate 191, which acts as the Proton acceptor.

Belongs to the protein kinase superfamily. Ser/Thr protein kinase family. ZRK subfamily. In terms of assembly, component of a stable high-order oligomeric complex made of RKS1 and RPP13L4/ZAR1 which recruits Xanthomonas campestris effector XopAC/AvrAC-mediated uridylylated PBL2 in the presence of ATP to form a wheel-like pentameric resistosome; this complex triggers immunity toward X.campestris in vascular tissues. Interacts with RPP13L4/ZAR1 and uridylylated PBL2. Expressed at high levels in germinating seeds and at lower levels in adult leaves.

The catalysed reaction is L-seryl-[protein] + ATP = O-phospho-L-seryl-[protein] + ADP + H(+). The enzyme catalyses L-threonyl-[protein] + ATP = O-phospho-L-threonyl-[protein] + ADP + H(+). Functionally, serine/threonine-protein kinase that confers a broad-spectrum quantitative disease resistance (QDR) to the pathogenic biotrophic bacteria Xanthomonas campestris (e.g. pv. campestris (Xcc), pv. raphani, pv. armoriaceae and pv. incanae) by restricting bacterial spread to the vascular system from the infection site; X.campestris causes black rot disease in crops. Seems to not have any kinase activity. The sequence is that of Serine/threonine-protein kinase ZRK1 from Arabidopsis thaliana (Mouse-ear cress).